Consider the following 477-residue polypeptide: POC1 centriolar protein homolog B (477 aa).

WD repeat units lie at residues 16–55 (GHKA…RAYR), 58–97 (GHKD…KSSE), 100–139 (AHTA…FLYS), 142–181 (RHTH…CVNN), 183–223 (SDSV…LLQH), 226–265 (VHSC…LIYT), and 268–307 (GHTG…VHYR). Positions 449–469 (EQRLSLTEDKLKDCLENQQKL) form a coiled coil.

The protein belongs to the WD repeat POC1 family. As to quaternary structure, interacts with POC1A. Interacts with FAM161A. Interacts with CEP44; the interaction is direct and recruits POC1B to centriolar microtubules. Forms a microtubule-associated complex with POC5, CETN2 and FAM161A. Interacts with CCDC15. In terms of processing, phosphorylated in mitotic cells that may be mediated by CDK1.

The protein resides in the cytoplasm. It is found in the cytoskeleton. It localises to the microtubule organizing center. Its subcellular location is the centrosome. The protein localises to the centriole. The protein resides in the cilium basal body. It is found in the spindle pole. Its function is as follows. Plays an important role in centriole assembly and/or stability and ciliogenesis. Involved in early steps of centriole duplication, as well as in the later steps of centriole length control. Acts in concert with POC1A to ensure centriole integrity and proper mitotic spindle formation. Required for primary cilia formation, ciliary length and also cell proliferation. Required for retinal integrity. Acts as a positive regulator of centriole elongation. The polypeptide is POC1 centriolar protein homolog B (Poc1b) (Rattus norvegicus (Rat)).